A 449-amino-acid polypeptide reads, in one-letter code: Adenylosuccinate synthetase (449 aa).

GTP contacts are provided by residues Gly-12–Lys-18 and Gly-40–Thr-42. The Proton acceptor role is filled by Asp-13. Mg(2+) is bound by residues Asp-13 and Gly-40. IMP-binding positions include Asp-13–Lys-16, Asn-38–His-41, Thr-128, Arg-142, Gln-223, Thr-238, and Arg-302. Catalysis depends on His-41, which acts as the Proton donor. Thr-298–Arg-304 contributes to the substrate binding site. Residues Arg-304, Lys-330–Asp-332, and Ser-412–Gly-414 each bind GTP.

The protein belongs to the adenylosuccinate synthetase family. As to quaternary structure, homodimer. Mg(2+) is required as a cofactor.

It localises to the cytoplasm. The enzyme catalyses IMP + L-aspartate + GTP = N(6)-(1,2-dicarboxyethyl)-AMP + GDP + phosphate + 2 H(+). It participates in purine metabolism; AMP biosynthesis via de novo pathway; AMP from IMP: step 1/2. Plays an important role in the de novo pathway of purine nucleotide biosynthesis. Catalyzes the first committed step in the biosynthesis of AMP from IMP. This is Adenylosuccinate synthetase from Synechococcus sp. (strain JA-2-3B'a(2-13)) (Cyanobacteria bacterium Yellowstone B-Prime).